A 472-amino-acid polypeptide reads, in one-letter code: F420-non-reducing hydrogenase subunit A (472 aa).

Ni(2+) is bound by residues Cys-61, Cys-64, Cys-442, and Cys-445.

The protein belongs to the [NiFe]/[NiFeSe] hydrogenase large subunit family. In terms of assembly, the F420-non-reducing hydrogenase is composed of three subunits; MvhA, MvhD and MvhG. It forms a complex with the heterodisulfide reductase (hdr). The cofactor is Ni(2+).

In terms of biological role, part of a complex that provides reducing equivalents for heterodisulfide reductase. The polypeptide is F420-non-reducing hydrogenase subunit A (mvhA) (Methanothermobacter marburgensis (strain ATCC BAA-927 / DSM 2133 / JCM 14651 / NBRC 100331 / OCM 82 / Marburg) (Methanobacterium thermoautotrophicum)).